The following is a 678-amino-acid chain: Transcriptional regulator CRZ1 (678 aa).

A compositionally biased stretch (polar residues) spans M1–S21. 2 disordered regions span residues M1–F50 and T159–D195. Positions Y34–S47 are enriched in low complexity. A compositionally biased stretch (polar residues) spans R166–D195. Position 170 is a phosphothreonine (T170). 3 positions are modified to phosphoserine: S175, S245, and S385. Residues K401–N486 are disordered. Low complexity predominate over residues S410–I428. 2 stretches are compositionally biased toward basic and acidic residues: residues S429–E446 and D457–S467. The span at N472–N486 shows a compositional bias: low complexity. 2 consecutive C2H2-type zinc fingers follow at residues F569–H591 and F597–H619.

Phosphorylated. Dephosphorylated by calcineurin which leads to rapid translocation from the cytoplasm to the nucleus. Phosphorylated by the cyclin-CDK PHO80-PHO85.

The protein localises to the nucleus. Its subcellular location is the cytoplasm. Its function is as follows. Involved in the regulation of calcium ion homeostasis. Binds to the calcineurin-dependent response element. Transcriptionally regulates PMC1, PMR1, PMR2A and FKS2. The sequence is that of Transcriptional regulator CRZ1 (CRZ1) from Saccharomyces cerevisiae (strain ATCC 204508 / S288c) (Baker's yeast).